A 2025-amino-acid polypeptide reads, in one-letter code: E3 ubiquitin-protein ligase TRIP12 (2025 aa).

Over residues 1 to 10 the composition is skewed to polar residues; that stretch reads MSNRPNNNPG. The segment at 1–404 is disordered; the sequence is MSNRPNNNPG…SGESESDDSE (404 aa). An N-acetylserine modification is found at S2. At S12 the chain carries Phosphoserine. Positions 18 to 27 are enriched in polar residues; that stretch reads RNTAGAQPQD. The span at 48-70 shows a compositional bias: basic and acidic residues; it reads DPDRANTSERQKTGQVPKKDNSR. Phosphoserine occurs at positions 77, 85, and 100. The segment covering 78–88 has biased composition (polar residues); sequence PDYNRTNSPSS. A compositionally biased stretch (polar residues) spans 119–132; the sequence is EQQLKSAQLPSTSK. Composition is skewed to low complexity over residues 154-166 and 177-215; these read SSCV…SEST and KLAS…ASST. Residue K181 is modified to N6-acetyllysine. The segment covering 280 to 290 has biased composition (polar residues); that stretch reads PGSSKSETSKP. A phosphoserine mark is found at S310 and S312. Positions 326–338 are enriched in polar residues; the sequence is QKTTGSCASTSRR. Over residues 346–358 the composition is skewed to basic and acidic residues; sequence GAAEARRQEKMAD. Residues 360–371 are compositionally biased toward polar residues; that stretch reads ESNQETVNSSAA. A compositionally biased stretch (low complexity) spans 379–397; the sequence is GAAASSSVAGAVGMTTSGE. The 115-residue stretch at 755-869 folds into the WWE domain; it reads MLKKGNAQNT…DPELAKSFIK (115 aa). The disordered stretch occupies residues 970–1077; sequence ESLLTSPPKA…QSPKSSFLAS (108 aa). Phosphoserine is present on S975. The segment covering 983-1006 has biased composition (low complexity); sequence GSGSLGSTTPASSGTATAATNASA. Phosphoserine is present on residues S1024 and S1030. Residues 1034–1047 show a composition bias toward basic residues; it reads KRKRLPKRGPRRPK. The residue at position 1049 (S1049) is a Phosphoserine. The span at 1050-1059 shows a compositional bias: basic and acidic residues; the sequence is PPRDDDKVDN. The span at 1062-1073 shows a compositional bias: low complexity; the sequence is KSPTTTQSPKSS. Residues S1063, S1350, S1355, S1362, and S1409 each carry the phosphoserine modification. Position 1410 is a phosphothreonine (T1410). Disordered stretches follow at residues 1441–1466 and 1601–1620; these read TKDC…NAKK and TNPE…PRLD. At K1458 the chain carries N6-acetyllysine. S1460 carries the phosphoserine modification. Residues 1529–1603 form a K-box region; the sequence is EIIPTSEFIN…AMQRLLDTNP (75 aa). Residues 1918-2025 form the HECT domain; the sequence is PDHGYTHDSR…REGQQSFHLS (108 aa). The active-site Glycyl thioester intermediate is the C1992.

This sequence belongs to the UPL family. K-HECT subfamily. Interacts with MYC; leading to disrupt interaction with isoform p19ARF/ARF of CDKN2A. Interacts with TRADD; leading to disrupt interaction with isoform p19ARF/ARF of CDKN2A. Interacts with SMARCC1; leading to disrupt interaction with SMARCE1.

Its subcellular location is the nucleus. The protein localises to the nucleoplasm. The catalysed reaction is S-ubiquitinyl-[E2 ubiquitin-conjugating enzyme]-L-cysteine + [acceptor protein]-L-lysine = [E2 ubiquitin-conjugating enzyme]-L-cysteine + N(6)-ubiquitinyl-[acceptor protein]-L-lysine.. It functions in the pathway protein modification; protein ubiquitination. In terms of biological role, E3 ubiquitin-protein ligase involved in ubiquitin fusion degradation (UFD) pathway and regulation of DNA repair. Part of the ubiquitin fusion degradation (UFD) pathway, a process that mediates ubiquitination of protein at their N-terminus, regardless of the presence of lysine residues in target proteins. Acts as a key regulator of DNA damage response by acting as a suppressor of RNF168, an E3 ubiquitin-protein ligase that promotes accumulation of 'Lys-63'-linked histone H2A and H2AX at DNA damage sites, thereby acting as a guard against excessive spreading of ubiquitinated chromatin at damaged chromosomes. In normal cells, mediates ubiquitination and degradation of isoform p19ARF/ARF of CDKN2A, a lysine-less tumor suppressor required for p53/TP53 activation under oncogenic stress. In cancer cells, however, isoform p19ARF/ARF and TRIP12 are located in different cell compartments, preventing isoform p19ARF/ARF ubiquitination and degradation. Does not mediate ubiquitination of isoform p16-INK4a of CDKN2A. Also catalyzes ubiquitination of NAE1 and SMARCE1, leading to their degradation. Ubiquitination and degradation of target proteins is regulated by interaction with proteins such as MYC, TRADD or SMARCC1, which disrupt the interaction between TRIP12 and target proteins. Mediates ubiquitination of ASXL1: following binding to N(6)-methyladenosine methylated DNA, ASXL1 is ubiquitinated by TRIP12, leading to its degradation and subsequent inactivation of the PR-DUB complex. The protein is E3 ubiquitin-protein ligase TRIP12 (Trip12) of Mus musculus (Mouse).